The sequence spans 306 residues: Eukaryotic translation initiation factor 2 subunit alpha (306 aa).

The S1 motif domain occupies 17 to 88; that stretch reads DELVVVNVRQ…EKGYIDLSKR (72 aa). S52 is subject to Phosphoserine. A Phosphothreonine modification is found at T179. Phosphoserine occurs at positions 273, 295, 303, and 305.

This sequence belongs to the eIF-2-alpha family. As to quaternary structure, eukaryotic translation initiation factor 2 eIF2 is a heterotrimeric complex composed of an alpha, a beta and a gamma subunit.

The protein localises to the cytoplasm. The protein resides in the cytosol. EIF-2 functions in the early steps of protein synthesis by forming a ternary complex with GTP and initiator tRNA. This complex binds to a 40S ribosomal subunit, followed by mRNA binding to form a 43S pre-initiation complex. Junction of the 60S ribosomal subunit to form the 80S initiation complex is preceded by hydrolysis of the GTP bound to eIF-2 and release of an eIF-2-GDP binary complex. In order for eIF-2 to recycle and catalyze another round of initiation, the GDP bound to eIF-2 must exchange with GTP by way of a reaction catalyzed by eIF2B. The polypeptide is Eukaryotic translation initiation factor 2 subunit alpha (tif211) (Schizosaccharomyces pombe (strain 972 / ATCC 24843) (Fission yeast)).